Consider the following 374-residue polypeptide: tRNA-specific 2-thiouridylase MnmA (374 aa).

Residues 13-20 (GMSGGVDS) and Met39 each bind ATP. Residues 99-101 (NPD) are interaction with target base in tRNA. The Nucleophile role is filled by Cys104. Cys104 and Cys201 are oxidised to a cystine. Gly128 provides a ligand contact to ATP. Residues 151–153 (KDQ) are interaction with tRNA. Residue Cys201 is the Cysteine persulfide intermediate of the active site. The segment at 313–314 (RY) is interaction with tRNA.

The protein belongs to the MnmA/TRMU family.

The protein resides in the cytoplasm. The enzyme catalyses S-sulfanyl-L-cysteinyl-[protein] + uridine(34) in tRNA + AH2 + ATP = 2-thiouridine(34) in tRNA + L-cysteinyl-[protein] + A + AMP + diphosphate + H(+). Its function is as follows. Catalyzes the 2-thiolation of uridine at the wobble position (U34) of tRNA, leading to the formation of s(2)U34. The polypeptide is tRNA-specific 2-thiouridylase MnmA (Streptococcus equi subsp. equi (strain 4047)).